A 256-amino-acid chain; its full sequence is Triosephosphate isomerase (256 aa).

12-14 is a binding site for substrate; the sequence is NWK. The active-site Electrophile is the His99. The Proton acceptor role is filled by Glu169. Residues Gly175, Ser214, and 235 to 236 each bind substrate; that span reads GG.

This sequence belongs to the triosephosphate isomerase family. Homodimer.

It localises to the cytoplasm. The catalysed reaction is D-glyceraldehyde 3-phosphate = dihydroxyacetone phosphate. Its pathway is carbohydrate biosynthesis; gluconeogenesis. It participates in carbohydrate degradation; glycolysis; D-glyceraldehyde 3-phosphate from glycerone phosphate: step 1/1. Involved in the gluconeogenesis. Catalyzes stereospecifically the conversion of dihydroxyacetone phosphate (DHAP) to D-glyceraldehyde-3-phosphate (G3P). The protein is Triosephosphate isomerase of Mesorhizobium japonicum (strain LMG 29417 / CECT 9101 / MAFF 303099) (Mesorhizobium loti (strain MAFF 303099)).